We begin with the raw amino-acid sequence, 293 residues long: Small ribosomal subunit biogenesis GTPase RsgA (293 aa).

The region spanning 63 to 223 (KNELVRPPIA…VADTPGFSSL (161 aa)) is the CP-type G domain. GTP contacts are provided by residues 112-115 (SKMD) and 166-174 (GQSGVGKSS). Cys247, Cys252, His254, and Cys260 together coordinate Zn(2+).

The protein belongs to the TRAFAC class YlqF/YawG GTPase family. RsgA subfamily. In terms of assembly, monomer. Associates with 30S ribosomal subunit, binds 16S rRNA. Zn(2+) serves as cofactor.

The protein resides in the cytoplasm. In terms of biological role, one of several proteins that assist in the late maturation steps of the functional core of the 30S ribosomal subunit. Helps release RbfA from mature subunits. May play a role in the assembly of ribosomal proteins into the subunit. Circularly permuted GTPase that catalyzes slow GTP hydrolysis, GTPase activity is stimulated by the 30S ribosomal subunit. The polypeptide is Small ribosomal subunit biogenesis GTPase RsgA (Bacillus cytotoxicus (strain DSM 22905 / CIP 110041 / 391-98 / NVH 391-98)).